The sequence spans 215 residues: Cytochrome b6 (215 aa).

Residues 32-52 (IFYCLGGITLTCFLVQVATGF) traverse the membrane as a helical segment. C35 serves as a coordination point for heme c. Positions 86 and 100 each coordinate heme b. The next 3 helical transmembrane spans lie at 90-110 (ASMM…TGGF), 116-136 (LTWV…VTGY), and 186-206 (LHTF…FLMI). Residues H187 and H202 each coordinate heme b.

It belongs to the cytochrome b family. PetB subfamily. The 4 large subunits of the cytochrome b6-f complex are cytochrome b6, subunit IV (17 kDa polypeptide, PetD), cytochrome f and the Rieske protein, while the 4 small subunits are PetG, PetL, PetM and PetN. The complex functions as a dimer. Heme b is required as a cofactor. Heme c serves as cofactor.

It localises to the plastid. Its subcellular location is the chloroplast thylakoid membrane. In terms of biological role, component of the cytochrome b6-f complex, which mediates electron transfer between photosystem II (PSII) and photosystem I (PSI), cyclic electron flow around PSI, and state transitions. The polypeptide is Cytochrome b6 (Huperzia lucidula (Shining clubmoss)).